A 590-amino-acid polypeptide reads, in one-letter code: Complement component C8 beta chain (590 aa).

An N-terminal signal peptide occupies residues 1–32 (MKKSWTWTWRVPAELLLLCAALGCLCVPGSRS). A propeptide spanning residues 33-54 (ERPRSLEPTVVNRSLAKSRHSR) is cleaved from the precursor. Asn-44 is a glycosylation site (N-linked (GlcNAc...) asparagine). The region spanning 64–117 (DCELSSWSSWTMCDPCQKKRYRHAYLLRPSQFNGEPCNFSDKEVEDCATSRPCR) is the TSP type-1 1 domain. Disulfide bonds link Cys-65–Cys-100, Cys-76–Cys-110, Cys-79–Cys-116, Cys-122–Cys-133, Cys-127–Cys-146, Cys-140–Cys-155, and Cys-162–Cys-200. C-linked (Man) tryptophan glycans are attached at residues Trp-70 and Trp-73. The N-linked (GlcNAc...) asparagine glycan is linked to Asn-101. One can recognise an LDL-receptor class A domain in the interval 120–157 (VRCEGFVCAQTGRCVNRRLLCNGDNDCGDQSDEANCRK). 6 residues coordinate Ca(2+): Leu-138, Asn-141, Asp-143, Asp-145, Asp-151, and Glu-152. In terms of domain architecture, MACPF spans 158 to 504 (IYKKCHHEME…EFQGEVSPCR (347 aa)). Beta stranded transmembrane passes span 252–259 (STFNLGFK), 262–269 (SIFEFGIN), 379–386 (AKNDFKLG), and 392–399 (VYVSLGVS). Cys-378 and Cys-403 are oxidised to a cystine. Phosphothreonine is present on Thr-418. Disulfide bonds link Cys-503–Cys-550, Cys-505–Cys-521, Cys-508–Cys-523, and Cys-525–Cys-534. The EGF-like domain maps to 505 to 535 (CAPCQGNGVPVQKGSRCDCICPVGFQGSACE). The TSP type-1 2 domain maps to 545–588 (DGRWSCWSRWSSCSGGQKTRRRQCNNPAPQDGGSPCSGPASETL). Trp-551 and Trp-554 each carry a C-linked (Man) tryptophan glycan. A disulfide bond links Cys-557 and Cys-590. Residues 557–590 (CSGGQKTRRRQCNNPAPQDGGSPCSGPASETLAC) are disordered.

It belongs to the complement C6/C7/C8/C9 family. In terms of assembly, heterotrimer of 3 chains: alpha (C8A), beta (C8B) and gamma (C8G); the alpha and gamma chains are disulfide bonded. Component of the membrane attack complex (MAC), composed of complement C5b, C6, C7, C8A, C8B, C8G and multiple copies of the pore-forming subunit C9. N-glycosylated; contains one or two bound glycans. Not O-glycosylated.

The protein localises to the secreted. It localises to the target cell membrane. Membrane attack complex (MAC) assembly is inhibited by CD59, thereby protecting self-cells from damage during complement activation. CD59 acts by binding to the beta-haipins of C8 (C8A and C8B), forming an intermolecular beta-sheet that prevents incorporation of the multiple copies of C9 required for complete formation of the osmolytic pore. MAC assembly is also inhibited by clusterin (CLU) chaperones that inhibit polymerization of C9. Component of the membrane attack complex (MAC), a multiprotein complex activated by the complement cascade, which inserts into a target cell membrane and forms a pore, leading to target cell membrane rupture and cell lysis. The MAC is initiated by proteolytic cleavage of C5 into complement C5b in response to the classical, alternative, lectin and GZMK complement pathways. The complement pathways consist in a cascade of proteins that leads to phagocytosis and breakdown of pathogens and signaling that strengthens the adaptive immune system. C8B, together with C8A and C8G, inserts into the target membrane, but does not form pores by itself. During MAC assembly, associates with C5b, C6 and C7 to form the C5b8 intermediate complex that inserts into the target membrane and traverses the bilayer increasing membrane rigidity. The chain is Complement component C8 beta chain (C8B) from Oryctolagus cuniculus (Rabbit).